Reading from the N-terminus, the 378-residue chain is UDP-N-acetylglucosamine--N-acetylmuramyl-(pentapeptide) pyrophosphoryl-undecaprenol N-acetylglucosamine transferase (378 aa).

UDP-N-acetyl-alpha-D-glucosamine-binding positions include 14–16 (TGG), N125, R165, S193, and Q293.

This sequence belongs to the glycosyltransferase 28 family. MurG subfamily.

The protein resides in the cell inner membrane. It carries out the reaction di-trans,octa-cis-undecaprenyl diphospho-N-acetyl-alpha-D-muramoyl-L-alanyl-D-glutamyl-meso-2,6-diaminopimeloyl-D-alanyl-D-alanine + UDP-N-acetyl-alpha-D-glucosamine = di-trans,octa-cis-undecaprenyl diphospho-[N-acetyl-alpha-D-glucosaminyl-(1-&gt;4)]-N-acetyl-alpha-D-muramoyl-L-alanyl-D-glutamyl-meso-2,6-diaminopimeloyl-D-alanyl-D-alanine + UDP + H(+). The protein operates within cell wall biogenesis; peptidoglycan biosynthesis. In terms of biological role, cell wall formation. Catalyzes the transfer of a GlcNAc subunit on undecaprenyl-pyrophosphoryl-MurNAc-pentapeptide (lipid intermediate I) to form undecaprenyl-pyrophosphoryl-MurNAc-(pentapeptide)GlcNAc (lipid intermediate II). The polypeptide is UDP-N-acetylglucosamine--N-acetylmuramyl-(pentapeptide) pyrophosphoryl-undecaprenol N-acetylglucosamine transferase (Bartonella henselae (strain ATCC 49882 / DSM 28221 / CCUG 30454 / Houston 1) (Rochalimaea henselae)).